The chain runs to 513 residues: ATP synthase subunit alpha (513 aa).

169–176 (GDRQTGKT) contributes to the ATP binding site.

This sequence belongs to the ATPase alpha/beta chains family. F-type ATPases have 2 components, CF(1) - the catalytic core - and CF(0) - the membrane proton channel. CF(1) has five subunits: alpha(3), beta(3), gamma(1), delta(1), epsilon(1). CF(0) has three main subunits: a(1), b(2) and c(9-12). The alpha and beta chains form an alternating ring which encloses part of the gamma chain. CF(1) is attached to CF(0) by a central stalk formed by the gamma and epsilon chains, while a peripheral stalk is formed by the delta and b chains.

The protein localises to the cell inner membrane. It catalyses the reaction ATP + H2O + 4 H(+)(in) = ADP + phosphate + 5 H(+)(out). Functionally, produces ATP from ADP in the presence of a proton gradient across the membrane. The alpha chain is a regulatory subunit. In Shewanella oneidensis (strain ATCC 700550 / JCM 31522 / CIP 106686 / LMG 19005 / NCIMB 14063 / MR-1), this protein is ATP synthase subunit alpha.